The sequence spans 338 residues: Dodecaprenyl-phosphate galacturonate synthase (338 aa).

2 consecutive transmembrane segments (helical) span residues 254–274 (FFGS…LYLG) and 289–309 (MLMV…TGIL).

Belongs to the glycosyltransferase 2 family.

The protein localises to the cell membrane. It carries out the reaction di-trans,nona-cis-dodecaprenyl phosphate + UDP-alpha-D-galacturonate = beta-D-galacturonosyl di-trans,nona-cis-dodecaprenyl phosphate + UDP. Its function is as follows. Glycosyltransferase that catalyzes the synthesis of dodecaprenyl-phosphate galacturonate (Dod-P-GalA), likely from UDP-GalA and dodecaprenyl-phosphate. Dod-P-GalA is the lipid donor required for GalA transfer to lipopolysaccharide (LPS) specific residues catalyzed by the GalA transferases RgtA, RgtB, RgtC and RgtD. This Rhizobium johnstonii (strain DSM 114642 / LMG 32736 / 3841) (Rhizobium leguminosarum bv. viciae) protein is Dodecaprenyl-phosphate galacturonate synthase.